We begin with the raw amino-acid sequence, 60 residues long: Mastoparan-VB2 (60 aa).

A signal peptide spans methionine 1 to alanine 27. AXPX repeat units lie at residues alanine 27 to lysine 30, alanine 31 to leucine 34, alanine 35 to phenylalanine 38, and alanine 41 to aspartate 44. Positions aspartate 28 to proline 45 are excised as a propeptide. Leucine 59 is subject to Leucine amide.

The protein belongs to the MCD family. Mastoparan subfamily. As to expression, expressed by the venom gland.

It localises to the secreted. It is found in the target cell membrane. Its function is as follows. Antimicrobial peptide. Shows activity against both Gram-positive and -negative bacteria, as well against fungi. Also promotes moderate mast cell degranulation. Does not show hemolytic activity on rabbit and human erythrocytes. Its mast cell degranulation activity may be related to the activation of G-protein coupled receptors in mast cells as well as interaction with other proteins located in cell endosomal membranes in the mast cells. This is Mastoparan-VB2 from Vespa bicolor (Black shield wasp).